The primary structure comprises 341 residues: L-threonine 3-dehydrogenase (341 aa).

A Zn(2+)-binding site is contributed by Cys38. Active-site charge relay system residues include Thr40 and His43. Positions 63, 64, 93, 96, 99, and 107 each coordinate Zn(2+). Residues Ile175, Asp195, Arg200, 262-264 (LGI), and 286-287 (IY) each bind NAD(+).

It belongs to the zinc-containing alcohol dehydrogenase family. In terms of assembly, homotetramer. Requires Zn(2+) as cofactor.

It localises to the cytoplasm. The enzyme catalyses L-threonine + NAD(+) = (2S)-2-amino-3-oxobutanoate + NADH + H(+). The protein operates within amino-acid degradation; L-threonine degradation via oxydo-reductase pathway; glycine from L-threonine: step 1/2. Functionally, catalyzes the NAD(+)-dependent oxidation of L-threonine to 2-amino-3-ketobutyrate. In Escherichia fergusonii (strain ATCC 35469 / DSM 13698 / CCUG 18766 / IAM 14443 / JCM 21226 / LMG 7866 / NBRC 102419 / NCTC 12128 / CDC 0568-73), this protein is L-threonine 3-dehydrogenase.